Here is a 92-residue protein sequence, read N- to C-terminus: Small ribosomal subunit protein uS19 (92 aa).

It belongs to the universal ribosomal protein uS19 family.

In terms of biological role, protein S19 forms a complex with S13 that binds strongly to the 16S ribosomal RNA. In Xanthobacter autotrophicus (strain ATCC BAA-1158 / Py2), this protein is Small ribosomal subunit protein uS19.